We begin with the raw amino-acid sequence, 142 residues long: Hemoglobin subunit alpha-4 (142 aa).

Residues 2-142 enclose the Globin domain; the sequence is VLSAADKSNV…VSTVLTSKYR (141 aa). An O2-binding site is contributed by H59. H88 is a binding site for heme b.

Belongs to the globin family. As to quaternary structure, heterotetramer of two alpha chains and two beta chains. In terms of tissue distribution, red blood cells.

In terms of biological role, involved in oxygen transport from the lung to the various peripheral tissues. This Bubalus bubalis (Domestic water buffalo) protein is Hemoglobin subunit alpha-4.